A 610-amino-acid chain; its full sequence is Glutamine--fructose-6-phosphate aminotransferase [isomerizing] (610 aa).

Cys2 serves as the catalytic Nucleophile; for GATase activity. Positions 2-221 (CGIVGAVAQR…DGDVVDLQLA (220 aa)) constitute a Glutamine amidotransferase type-2 domain. SIS domains follow at residues 286–426 (AYKV…TRGR) and 459–600 (WADR…VDKP). The active-site For Fru-6P isomerization activity is the Lys605.

Homodimer.

Its subcellular location is the cytoplasm. The catalysed reaction is D-fructose 6-phosphate + L-glutamine = D-glucosamine 6-phosphate + L-glutamate. Catalyzes the first step in hexosamine metabolism, converting fructose-6P into glucosamine-6P using glutamine as a nitrogen source. This is Glutamine--fructose-6-phosphate aminotransferase [isomerizing] from Bordetella bronchiseptica (strain ATCC BAA-588 / NCTC 13252 / RB50) (Alcaligenes bronchisepticus).